The sequence spans 232 residues: 5'-methylthioadenosine/S-adenosylhomocysteine nucleosidase (232 aa).

The active-site Proton acceptor is the glutamate 12. Residues glycine 78, methionine 153, and 174–175 (ME) each bind substrate. Aspartate 198 (proton donor) is an active-site residue.

Belongs to the PNP/UDP phosphorylase family. MtnN subfamily.

The enzyme catalyses S-adenosyl-L-homocysteine + H2O = S-(5-deoxy-D-ribos-5-yl)-L-homocysteine + adenine. It carries out the reaction S-methyl-5'-thioadenosine + H2O = 5-(methylsulfanyl)-D-ribose + adenine. The catalysed reaction is 5'-deoxyadenosine + H2O = 5-deoxy-D-ribose + adenine. It functions in the pathway amino-acid biosynthesis; L-methionine biosynthesis via salvage pathway; S-methyl-5-thio-alpha-D-ribose 1-phosphate from S-methyl-5'-thioadenosine (hydrolase route): step 1/2. Its function is as follows. Catalyzes the irreversible cleavage of the glycosidic bond in both 5'-methylthioadenosine (MTA) and S-adenosylhomocysteine (SAH/AdoHcy) to adenine and the corresponding thioribose, 5'-methylthioribose and S-ribosylhomocysteine, respectively. Also cleaves 5'-deoxyadenosine, a toxic by-product of radical S-adenosylmethionine (SAM) enzymes, into 5-deoxyribose and adenine. The chain is 5'-methylthioadenosine/S-adenosylhomocysteine nucleosidase from Hydrogenovibrio crunogenus (strain DSM 25203 / XCL-2) (Thiomicrospira crunogena).